Here is a 90-residue protein sequence, read N- to C-terminus: Small ribosomal subunit protein bS16 (90 aa).

The protein belongs to the bacterial ribosomal protein bS16 family.

The sequence is that of Small ribosomal subunit protein bS16 from Streptococcus sanguinis (strain SK36).